Consider the following 432-residue polypeptide: Gamma-glutamyl phosphate reductase (432 aa).

It belongs to the gamma-glutamyl phosphate reductase family.

It localises to the cytoplasm. It carries out the reaction L-glutamate 5-semialdehyde + phosphate + NADP(+) = L-glutamyl 5-phosphate + NADPH + H(+). Its pathway is amino-acid biosynthesis; L-proline biosynthesis; L-glutamate 5-semialdehyde from L-glutamate: step 2/2. Functionally, catalyzes the NADPH-dependent reduction of L-glutamate 5-phosphate into L-glutamate 5-semialdehyde and phosphate. The product spontaneously undergoes cyclization to form 1-pyrroline-5-carboxylate. The protein is Gamma-glutamyl phosphate reductase of Psychrobacter sp. (strain PRwf-1).